The chain runs to 228 residues: Cytidylate kinase (228 aa).

17-25 is an ATP binding site; sequence GPSASGKGT.

This sequence belongs to the cytidylate kinase family. Type 1 subfamily.

Its subcellular location is the cytoplasm. It catalyses the reaction CMP + ATP = CDP + ADP. The enzyme catalyses dCMP + ATP = dCDP + ADP. The protein is Cytidylate kinase of Paraburkholderia phytofirmans (strain DSM 17436 / LMG 22146 / PsJN) (Burkholderia phytofirmans).